The sequence spans 459 residues: Mitochondrial distribution and morphology protein 34 (459 aa).

Residues 1–190 (MSFRFNEAVF…LPSLIFNTSQ (190 aa)) form the SMP-LTD domain. Over residues 338-347 (RSNSNDDNAK) the composition is skewed to basic and acidic residues. A disordered region spans residues 338 to 375 (RSNSNDDNAKPRRRKIKCKKTRTPSNLQSQGEQAVDDS). Positions 348–359 (PRRRKIKCKKTR) are enriched in basic residues.

This sequence belongs to the MDM34 family. As to quaternary structure, component of the ER-mitochondria encounter structure (ERMES) or MDM complex, composed of MMM1, MDM10, MDM12 and MDM34. In terms of processing, ubiquitinated by a SCF (SKP1-CUL1-F-box protein) E3 ubiquitin-protein ligase complex containing the F-box protein MDM30. Ubiquitination is important for mitochondrial integrity.

Its subcellular location is the mitochondrion outer membrane. Functionally, component of the ERMES/MDM complex, which serves as a molecular tether to connect the endoplasmic reticulum (ER) and mitochondria. Components of this complex are involved in the control of mitochondrial shape and protein biogenesis, and function in nonvesicular lipid trafficking between the ER and mitochondria. MDM34 is required for the interaction of the ER-resident membrane protein MMM1 and the outer mitochondrial membrane-resident beta-barrel protein MDM10. This is Mitochondrial distribution and morphology protein 34 from Saccharomyces cerevisiae (strain YJM789) (Baker's yeast).